The following is a 90-amino-acid chain: Acylphosphatase (90 aa).

The 88-residue stretch at 3 to 90 (QKLFIVTGHV…EQFEHFEIRR (88 aa)) folds into the Acylphosphatase-like domain. Residues R18 and N36 contribute to the active site.

Belongs to the acylphosphatase family.

The catalysed reaction is an acyl phosphate + H2O = a carboxylate + phosphate + H(+). The chain is Acylphosphatase (acyP) from Actinobacillus pleuropneumoniae serotype 5b (strain L20).